The following is a 545-amino-acid chain: Esterase-5B (545 aa).

Residues 1–19 (MYCAKLILLLGCFWISSSA) form the signal peptide. C84 and C103 are oxidised to a cystine. The N-linked (GlcNAc...) asparagine glycan is linked to N113. S207 (acyl-ester intermediate) is an active-site residue. Cysteines 259 and 271 form a disulfide. Residue N421 is glycosylated (N-linked (GlcNAc...) asparagine). H467 acts as the Charge relay system in catalysis. Residue N507 is glycosylated (N-linked (GlcNAc...) asparagine). The cysteines at positions 515 and 536 are disulfide-linked.

Belongs to the type-B carboxylesterase/lipase family. As to quaternary structure, homodimer.

The protein resides in the secreted. The catalysed reaction is a carboxylic ester + H2O = an alcohol + a carboxylate + H(+). The sequence is that of Esterase-5B (Est-5B) from Drosophila persimilis (Fruit fly).